The chain runs to 94 residues: DNA-binding protein HU (94 aa).

The protein belongs to the bacterial histone-like protein family.

Its function is as follows. Histone-like DNA-binding protein which is capable of wrapping DNA to stabilize it, and thus to prevent its denaturation under extreme environmental conditions. In Xylella fastidiosa (strain 9a5c), this protein is DNA-binding protein HU (hup).